The following is a 156-amino-acid chain: ATP synthase subunit b (156 aa).

Residues 11–31 traverse the membrane as a helical segment; sequence AIAFVLFVLFCMKYVWPPIMA.

This sequence belongs to the ATPase B chain family. F-type ATPases have 2 components, F(1) - the catalytic core - and F(0) - the membrane proton channel. F(1) has five subunits: alpha(3), beta(3), gamma(1), delta(1), epsilon(1). F(0) has three main subunits: a(1), b(2) and c(10-14). The alpha and beta chains form an alternating ring which encloses part of the gamma chain. F(1) is attached to F(0) by a central stalk formed by the gamma and epsilon chains, while a peripheral stalk is formed by the delta and b chains.

The protein localises to the cell inner membrane. F(1)F(0) ATP synthase produces ATP from ADP in the presence of a proton or sodium gradient. F-type ATPases consist of two structural domains, F(1) containing the extramembraneous catalytic core and F(0) containing the membrane proton channel, linked together by a central stalk and a peripheral stalk. During catalysis, ATP synthesis in the catalytic domain of F(1) is coupled via a rotary mechanism of the central stalk subunits to proton translocation. In terms of biological role, component of the F(0) channel, it forms part of the peripheral stalk, linking F(1) to F(0). This chain is ATP synthase subunit b, found in Cronobacter sakazakii (strain ATCC BAA-894) (Enterobacter sakazakii).